The primary structure comprises 424 residues: 3-oxo-tetronate kinase (424 aa).

ATP contacts are provided by residues serine 260, 364–367 (GGET), and glycine 407.

The protein belongs to the four-carbon acid sugar kinase family.

It catalyses the reaction 3-dehydro-L-erythronate + ATP = 3-dehydro-4-O-phospho-L-erythronate + ADP + H(+). The catalysed reaction is 3-dehydro-D-erythronate + ATP = 3-dehydro-4-O-phospho-D-erythronate + ADP + H(+). In terms of biological role, catalyzes the ATP-dependent phosphorylation of 3-oxo-tetronate to 3-oxo-tetronate 4-phosphate. The protein is 3-oxo-tetronate kinase of Pectobacterium atrosepticum (strain SCRI 1043 / ATCC BAA-672) (Erwinia carotovora subsp. atroseptica).